The primary structure comprises 336 residues: Holliday junction branch migration complex subunit RuvB (336 aa).

Residues 4-184 are large ATPase domain (RuvB-L); the sequence is ADRLISAGTT…FGIVQRLEFY (181 aa). ATP is bound by residues isoleucine 23, arginine 24, glycine 65, lysine 68, threonine 69, threonine 70, 131–133, arginine 174, tyrosine 184, and arginine 221; that span reads EDY. Threonine 69 serves as a coordination point for Mg(2+). The interval 185–255 is small ATPAse domain (RuvB-S); that stretch reads QVPDLQYIVS…IAAQALDMLN (71 aa). The head domain (RuvB-H) stretch occupies residues 258–336; the sequence is AEGFDYMDRK…HFGITPPEMP (79 aa). DNA contacts are provided by arginine 294, arginine 313, and arginine 318.

This sequence belongs to the RuvB family. In terms of assembly, homohexamer. Forms an RuvA(8)-RuvB(12)-Holliday junction (HJ) complex. HJ DNA is sandwiched between 2 RuvA tetramers; dsDNA enters through RuvA and exits via RuvB. An RuvB hexamer assembles on each DNA strand where it exits the tetramer. Each RuvB hexamer is contacted by two RuvA subunits (via domain III) on 2 adjacent RuvB subunits; this complex drives branch migration. In the full resolvosome a probable DNA-RuvA(4)-RuvB(12)-RuvC(2) complex forms which resolves the HJ.

The protein localises to the cytoplasm. The enzyme catalyses ATP + H2O = ADP + phosphate + H(+). Functionally, the RuvA-RuvB-RuvC complex processes Holliday junction (HJ) DNA during genetic recombination and DNA repair, while the RuvA-RuvB complex plays an important role in the rescue of blocked DNA replication forks via replication fork reversal (RFR). RuvA specifically binds to HJ cruciform DNA, conferring on it an open structure. The RuvB hexamer acts as an ATP-dependent pump, pulling dsDNA into and through the RuvAB complex. RuvB forms 2 homohexamers on either side of HJ DNA bound by 1 or 2 RuvA tetramers; 4 subunits per hexamer contact DNA at a time. Coordinated motions by a converter formed by DNA-disengaged RuvB subunits stimulates ATP hydrolysis and nucleotide exchange. Immobilization of the converter enables RuvB to convert the ATP-contained energy into a lever motion, pulling 2 nucleotides of DNA out of the RuvA tetramer per ATP hydrolyzed, thus driving DNA branch migration. The RuvB motors rotate together with the DNA substrate, which together with the progressing nucleotide cycle form the mechanistic basis for DNA recombination by continuous HJ branch migration. Branch migration allows RuvC to scan DNA until it finds its consensus sequence, where it cleaves and resolves cruciform DNA. This chain is Holliday junction branch migration complex subunit RuvB, found in Shigella sonnei (strain Ss046).